Here is a 66-residue protein sequence, read N- to C-terminus: Beta-mammal toxin Css2 (66 aa).

An LCN-type CS-alpha/beta domain is found at 1 to 66 (KEGYLVSKST…VWPLPNKTCN (66 aa)). 4 disulfide bridges follow: cysteine 12–cysteine 65, cysteine 16–cysteine 41, cysteine 25–cysteine 46, and cysteine 29–cysteine 48. At asparagine 66 the chain carries Asparagine amide.

The protein belongs to the long (4 C-C) scorpion toxin superfamily. Sodium channel inhibitor family. Beta subfamily. Post-translationally, C-terminal amidation increases its affinity for sodium channels. As to expression, expressed by the venom gland.

It localises to the secreted. Its function is as follows. Beta toxin that binds site-4 of sodium channels (Nav) and reduces peak current (observed on Nav1.6/SCN8A (IC(50)=307 nM)), shifts the voltage of activation toward more negative potentials (observed on Nav1.6, Nav1.1 (weak), Nav1.2 (weak), and Nav1.7 (weak)), and induces resurgent currents at negative voltages following brief and strong depolarizations (observed on Nav1.6, Nav1.1 (weak), and Nav1.7 (weak)). A reduction of peak current of Nav1.5/SCN7A has been observed in another study (IC(50)=35-40 nM). This toxin is only active on mammals. It has been shown to bind phospholipids. The protein is Beta-mammal toxin Css2 of Centruroides suffusus (Durango bark scorpion).